The primary structure comprises 524 residues: Xanthotoxin 5-hydroxylase CYP82C4 (524 aa).

The helical transmembrane segment at 1–21 threads the bilayer; it reads MDTSLFSLFVPILVFVFIALF. Cys463 contacts heme.

It belongs to the cytochrome P450 family. Heme is required as a cofactor. Expressed in both primary and lateral roots under iron-deficient conditions, except in apical root zones, and mostly in the root epidermal layer.

The protein localises to the membrane. The enzyme catalyses fraxetin + reduced [NADPH--hemoprotein reductase] + O2 = sideretin (reduced form) + oxidized [NADPH--hemoprotein reductase] + H2O + H(+). It carries out the reaction xanthotoxin + reduced [NADPH--hemoprotein reductase] + O2 = 5-hydroxyxanthotoxin + oxidized [NADPH--hemoprotein reductase] + H2O + 2 H(+). Its pathway is phenylpropanoid metabolism. Its function is as follows. Can hydroxylate xanthotoxin (8-methoxypsoralen) to form 5-hydroxyxanthotoxin (5-hydroxy-8-methoxypsoralen) in vivo and in vitro. Involved in the early iron deficiency response, possibly through an IDE1-like mediated pathway. Involved in the pathway of sideretin biosynthesis from feruloyl CoA, a redox-active catecholic metabolite exuded by roots in response to iron deficiency in order to facilitate the uptake of iron; this pathway consists in the successive conversion from feruloyl CoA to scopoletin, from scopoletin to fraxetin and from fraxetin to sideretin. Catalyzes the biosynthesis of sideretin via fraxetin hydroxylation. The polypeptide is Xanthotoxin 5-hydroxylase CYP82C4 (Arabidopsis thaliana (Mouse-ear cress)).